The following is a 938-amino-acid chain: Scm-like with four MBT domains protein 2 (938 aa).

A disordered region spans residues 1–32; sequence MERYLPVSKKRNSSSSLEKITGSANGNGTLYS. The span at 13-30 shows a compositional bias: polar residues; that stretch reads SSSSLEKITGSANGNGTL. MBT repeat units lie at residues 43–143, 151–255, 265–371, and 379–475; these read FSWG…LRPP, SDWT…MDPP, FEWK…LAPP, and FNWV…LTTP. Residues 742–836 form a disordered region; that stretch reads PEGIPESLPE…TVPTTASSNN (95 aa). 2 stretches are compositionally biased toward basic and acidic residues: residues 765-777 and 809-822; these read TEQE…DTAR and RNSE…VERA. Residues 868–931 form the SAM domain; sequence WSVTDVVRFI…CHQIERVKVA (64 aa).

In terms of assembly, interacts with YY1. Interacts with methylated histones H3K9me2 and H4K20me2. Expressed in testis and, at much lower levels, in ovary.

It is found in the nucleus. Transcriptional repressor of HOXB13 gene. This chain is Scm-like with four MBT domains protein 2 (Sfmbt2), found in Mus musculus (Mouse).